The following is a 126-amino-acid chain: Aspartate 1-decarboxylase (126 aa).

The active-site Schiff-base intermediate with substrate; via pyruvic acid is the S25. Residue S25 is modified to Pyruvic acid (Ser). Residue T57 coordinates substrate. Y58 functions as the Proton donor in the catalytic mechanism. 73–75 (GGA) contacts substrate.

The protein belongs to the PanD family. In terms of assembly, heterooctamer of four alpha and four beta subunits. Pyruvate serves as cofactor. Is synthesized initially as an inactive proenzyme, which is activated by self-cleavage at a specific serine bond to produce a beta-subunit with a hydroxyl group at its C-terminus and an alpha-subunit with a pyruvoyl group at its N-terminus.

It localises to the cytoplasm. The catalysed reaction is L-aspartate + H(+) = beta-alanine + CO2. Its pathway is cofactor biosynthesis; (R)-pantothenate biosynthesis; beta-alanine from L-aspartate: step 1/1. Functionally, catalyzes the pyruvoyl-dependent decarboxylation of aspartate to produce beta-alanine. The protein is Aspartate 1-decarboxylase of Xylella fastidiosa (strain Temecula1 / ATCC 700964).